The following is a 396-amino-acid chain: METYDVLVIGGGPGGSTAARYAAKYGLRTLMIEKRPEIGSPVRCGEGLSKGILNEADIKPDKSFIANEVKGARIYGPSEKRPIILQSEKAGNEVGFVLERDKFDKHLAALAAKAGADVWVKSPALGVIKEDGKVAGAKIRHENNVVEVRAKMVIAADGFESEFGRWAGLKSVILARNDIISALQYRMINIDVDPDYTDFYLGSIAPGGYIWVFPKGEGMANVGIGSSINFIHNRLELKNYLDRFIENHPGLKKGQDIQLVTGGVSVSKVKMPITMPGLMLVGDAARLIDPITGGGIANAIVSGMYAAQVSKEAIESNDYSPQMMGKYEKLVKDRFERKHLRNWVAKEKLAQLSDETLDKLVDIVSEQVLTTISVEAILKAIAEKYPEVVKELEDLI.

Residues Gly14, Glu33, Cys44, Gly45, Gly47, Arg100, Ala124, Glu162, Asp283, Gly295, and Ile296 each contribute to the FAD site. Positions 338 and 374 each coordinate a 2,3-bis-O-(geranylgeranyl)-sn-glycerol 1-phospholipid.

The protein belongs to the geranylgeranyl reductase family. DGGGPL reductase subfamily. It depends on FAD as a cofactor.

It carries out the reaction 2,3-bis-O-(phytanyl)-sn-glycerol 1-phosphate + 8 NADP(+) = 2,3-bis-O-(geranylgeranyl)-sn-glycerol 1-phosphate + 8 NADPH + 8 H(+). The enzyme catalyses 2,3-bis-O-(phytanyl)-sn-glycerol 1-phosphate + 8 NAD(+) = 2,3-bis-O-(geranylgeranyl)-sn-glycerol 1-phosphate + 8 NADH + 8 H(+). It catalyses the reaction a 2,3-bis-O-phytanyl-sn-glycerol 1-phospholipid + 8 A = a 2,3-bis-O-(geranylgeranyl)-sn-glycerol 1-phospholipid + 8 AH2. The catalysed reaction is CDP-2,3-bis-O-(geranylgeranyl)-sn-glycerol + 8 AH2 = CDP-2,3-bis-O-(phytanyl)-sn-glycerol + 8 A. It carries out the reaction archaetidylserine + 8 AH2 = 2,3-bis-O-phytanyl-sn-glycero-3-phospho-L-serine + 8 A. The protein operates within membrane lipid metabolism; glycerophospholipid metabolism. Functionally, is involved in the reduction of 2,3-digeranylgeranylglycerophospholipids (unsaturated archaeols) into 2,3-diphytanylglycerophospholipids (saturated archaeols) in the biosynthesis of archaeal membrane lipids. Catalyzes the formation of archaetidic acid (2,3-di-O-phytanyl-sn-glyceryl phosphate) from 2,3-di-O-geranylgeranylglyceryl phosphate (DGGGP) via the hydrogenation of each double bond of the isoprenoid chains. Is also probably able to reduce double bonds of geranyl groups in CDP-2,3-bis-O-(geranylgeranyl)-sn-glycerol and archaetidylserine, thus acting at various stages in the biosynthesis of archaeal membrane lipids. In Thermoplasma volcanium (strain ATCC 51530 / DSM 4299 / JCM 9571 / NBRC 15438 / GSS1), this protein is Digeranylgeranylglycerophospholipid reductase.